Consider the following 347-residue polypeptide: tRNA N6-adenosine threonylcarbamoyltransferase (347 aa).

Residues histidine 109 and histidine 113 each contribute to the Fe cation site. Substrate is bound by residues 136–140 (TVSGG), aspartate 169, glycine 182, aspartate 186, and asparagine 284. Aspartate 312 contributes to the Fe cation binding site.

It belongs to the KAE1 / TsaD family. Requires Fe(2+) as cofactor.

It is found in the cytoplasm. The enzyme catalyses L-threonylcarbamoyladenylate + adenosine(37) in tRNA = N(6)-L-threonylcarbamoyladenosine(37) in tRNA + AMP + H(+). Functionally, required for the formation of a threonylcarbamoyl group on adenosine at position 37 (t(6)A37) in tRNAs that read codons beginning with adenine. Is involved in the transfer of the threonylcarbamoyl moiety of threonylcarbamoyl-AMP (TC-AMP) to the N6 group of A37, together with TsaE and TsaB. TsaD likely plays a direct catalytic role in this reaction. This chain is tRNA N6-adenosine threonylcarbamoyltransferase, found in Chlorobium phaeobacteroides (strain BS1).